Here is a 53-residue protein sequence, read N- to C-terminus: Lantibiotic paenibacillin (53 aa).

Positions 1–24 (MKVDQMFDLDLRKSYEASELSPQA) are excised as a propeptide. N-acetylalanine is present on Ala24. 2,3-didehydroalanine (Ser) is present on Ser25. 2,3-didehydrobutyrine is present on residues Thr29 and Thr30. Residues 34 to 38 (SKAVC) constitute a cross-link (lanthionine (Ser-Cys)). 3 cross-links (beta-methyllanthionine (Thr-Cys)) span residues 40 to 43 (TLTC), 42 to 45 (TCIC), and 46 to 49 (TGSC). Residues 48 to 52 (SCSNC) constitute a cross-link (lanthionine (Ser-Cys)). Ser50 bears the 2,3-didehydroalanine (Ser) mark.

Post-translationally, maturation of lantibiotics involves the enzymatic conversion of Thr, and Ser into dehydrated AA and the formation of thioether bonds with cysteine. This is followed by membrane translocation and cleavage of the modified precursor. The structure of the 2,3-didehydrobutyrines is not discussed in PubMed:17071789.

Its subcellular location is the secreted. In terms of biological role, lanthionine-containing peptide antibiotic (lantibiotic) active on Gram-positive bacteria. The bactericidal activity of lantibiotics is based on depolarization of energized bacterial cytoplasmic membranes, initiated by the formation of aqueous transmembrane pores. Lacks antibacterial activity against Gram-negative bacteria. The protein is Lantibiotic paenibacillin of Paenibacillus polymyxa (Bacillus polymyxa).